Reading from the N-terminus, the 234-residue chain is Small ribosomal subunit protein uS3 (234 aa).

The 69-residue stretch at Ile39–Arg107 folds into the KH type-2 domain. Residues Pro213–Ser222 are compositionally biased toward basic and acidic residues. The tract at residues Pro213–Lys234 is disordered. Residues Lys223–Lys234 are compositionally biased toward basic residues.

Belongs to the universal ribosomal protein uS3 family. In terms of assembly, part of the 30S ribosomal subunit. Forms a tight complex with proteins S10 and S14.

Binds the lower part of the 30S subunit head. Binds mRNA in the 70S ribosome, positioning it for translation. The chain is Small ribosomal subunit protein uS3 from Aliarcobacter butzleri (strain RM4018) (Arcobacter butzleri).